The chain runs to 121 residues: DNA-directed RNA polymerase subunit omega (121 aa).

The protein belongs to the RNA polymerase subunit omega family. In terms of assembly, the RNAP catalytic core consists of 2 alpha, 1 beta, 1 beta' and 1 omega subunit. When a sigma factor is associated with the core the holoenzyme is formed, which can initiate transcription.

The enzyme catalyses RNA(n) + a ribonucleoside 5'-triphosphate = RNA(n+1) + diphosphate. Functionally, promotes RNA polymerase assembly. Latches the N- and C-terminal regions of the beta' subunit thereby facilitating its interaction with the beta and alpha subunits. This is DNA-directed RNA polymerase subunit omega from Syntrophobacter fumaroxidans (strain DSM 10017 / MPOB).